The following is a 114-amino-acid chain: Ribosome-binding factor A (114 aa).

It belongs to the RbfA family. As to quaternary structure, monomer. Binds 30S ribosomal subunits, but not 50S ribosomal subunits or 70S ribosomes.

It is found in the cytoplasm. One of several proteins that assist in the late maturation steps of the functional core of the 30S ribosomal subunit. Associates with free 30S ribosomal subunits (but not with 30S subunits that are part of 70S ribosomes or polysomes). Required for efficient processing of 16S rRNA. May interact with the 5'-terminal helix region of 16S rRNA. In Staphylococcus saprophyticus subsp. saprophyticus (strain ATCC 15305 / DSM 20229 / NCIMB 8711 / NCTC 7292 / S-41), this protein is Ribosome-binding factor A.